Consider the following 132-residue polypeptide: MLIGAPSNMRLRGALELLWRRLLHGLMQLRLVLKMHICSQLNHAIKRRAFLKTKGGKNALHGCLDTVINLQESILAGIRLVPVLPILLDYVLYNISLGGMTFADFLEVLLHFSALEGLCKGVFEADGLEAVH.

This is an uncharacterized protein from Saccharomyces cerevisiae (strain ATCC 204508 / S288c) (Baker's yeast).